The sequence spans 182 residues: NADH-quinone oxidoreductase subunit I (182 aa).

2 4Fe-4S ferredoxin-type domains span residues 50–82 (IILS…LQKA) and 92–121 (EFFR…MTPD). C62, C65, C68, C72, C101, C104, C107, and C111 together coordinate [4Fe-4S] cluster.

This sequence belongs to the complex I 23 kDa subunit family. As to quaternary structure, NDH-1 is composed of 14 different subunits. Subunits NuoA, H, J, K, L, M, N constitute the membrane sector of the complex. It depends on [4Fe-4S] cluster as a cofactor.

The protein localises to the cell inner membrane. It catalyses the reaction a quinone + NADH + 5 H(+)(in) = a quinol + NAD(+) + 4 H(+)(out). Functionally, NDH-1 shuttles electrons from NADH, via FMN and iron-sulfur (Fe-S) centers, to quinones in the respiratory chain. The immediate electron acceptor for the enzyme in this species is believed to be ubiquinone. Couples the redox reaction to proton translocation (for every two electrons transferred, four hydrogen ions are translocated across the cytoplasmic membrane), and thus conserves the redox energy in a proton gradient. The chain is NADH-quinone oxidoreductase subunit I from Psychrobacter arcticus (strain DSM 17307 / VKM B-2377 / 273-4).